The primary structure comprises 147 residues: Hemoglobin anodic subunit beta (147 aa).

Residues 2–147 (EWTEDERTAI…VTSALARQYH (146 aa)) enclose the Globin domain. Positions 63 and 92 each coordinate heme b.

This sequence belongs to the globin family. In terms of assembly, heterotetramer of two alpha chains and two beta chains. Red blood cells.

Its function is as follows. Involved in oxygen transport from gills to the various peripheral tissues. This chain is Hemoglobin anodic subunit beta (hbb1), found in Anguilla anguilla (European freshwater eel).